Here is a 396-residue protein sequence, read N- to C-terminus: Probable sugar efflux transporter (396 aa).

A run of 12 helical transmembrane segments spans residues 15 to 35 (VVTLAVAAFIFNTTEFVPVGL), 50 to 70 (VGIMLTIYAWVVALMSLPFML), 81 to 101 (LICLFVVFIASHVLSFLSWSF), 103 to 123 (VLVISRIGVAFAHAIFWSITA), 136 to 156 (AQALSLIATGTALAMVLGLPL), 170 to 190 (FFAIGIGAFITLLCLIKLLPL), 209 to 229 (PALMSIYLLTVVVVTAHYTAY), 246 to 266 (FATALLLLLGGAGIIGSVIFG), 275 to 295 (ALVSTAIALLLVCLALLLPAA), 299 to 319 (IHLGVLSIFWGIAMMIIGLGM), 333 to 353 (VAMALFSGIFNIGIGAGALVG), and 364 to 384 (MIGYVGAVPAFAALIWSIIIF).

This sequence belongs to the major facilitator superfamily. SotB (TC 2.A.1.2) family.

It is found in the cell inner membrane. Its function is as follows. Involved in the efflux of sugars. The physiological role may be the reduction of the intracellular concentration of toxic sugars or sugar metabolites. The protein is Probable sugar efflux transporter of Escherichia coli O17:K52:H18 (strain UMN026 / ExPEC).